A 512-amino-acid polypeptide reads, in one-letter code: Glutamate--tRNA ligase (512 aa).

The 'HIGH' region motif lies at 11–21 (PSPTGALHIGG). Residues 263 to 267 (KLSKR) carry the 'KMSKS' region motif. Position 266 (K266) interacts with ATP.

Belongs to the class-I aminoacyl-tRNA synthetase family. Glutamate--tRNA ligase type 1 subfamily. As to quaternary structure, monomer.

It is found in the cytoplasm. The enzyme catalyses tRNA(Glu) + L-glutamate + ATP = L-glutamyl-tRNA(Glu) + AMP + diphosphate. Catalyzes the attachment of glutamate to tRNA(Glu) in a two-step reaction: glutamate is first activated by ATP to form Glu-AMP and then transferred to the acceptor end of tRNA(Glu). The chain is Glutamate--tRNA ligase from Amoebophilus asiaticus (strain 5a2).